A 237-amino-acid polypeptide reads, in one-letter code: MSKNSKAYKAALEKIDAGRIYAPIDAMKTVKETAYSSYDPTVDVAIRLGVDPRKADQLVRGTVSLPNGTGKEVRVVVFAEGPNATAAEEAGADVVGTAELVERIQGGWTDFDAAIATPDQMAKVGRVARVLGPRGLMPNPKTGTVTTDVTKAVKEIKGGKISFRVDKAANLHAVLGKASFSAEQLAENYGALIDELLRVKPSAAKGRYLKKVTVSCTNGPAVPVDNTVVKNYTGEAE.

This sequence belongs to the universal ribosomal protein uL1 family. In terms of assembly, part of the 50S ribosomal subunit.

Its function is as follows. Binds directly to 23S rRNA. The L1 stalk is quite mobile in the ribosome, and is involved in E site tRNA release. In terms of biological role, protein L1 is also a translational repressor protein, it controls the translation of the L11 operon by binding to its mRNA. This Corynebacterium kroppenstedtii (strain DSM 44385 / JCM 11950 / CIP 105744 / CCUG 35717) protein is Large ribosomal subunit protein uL1.